Reading from the N-terminus, the 127-residue chain is HTH-type transcriptional regulator ImmR (127 aa).

A compositionally biased stretch (basic and acidic residues) spans 1 to 12 (MSLGKRLKEARQ). The disordered stretch occupies residues 1–22 (MSLGKRLKEARQKAGYTQKEAA). One can recognise an HTH cro/C1-type domain in the interval 7–61 (LKEARQKAGYTQKEAAEKLNIGNNNLSNYERDYRDPDTDTLLKLSNLYNVSTDYL). Positions 18–37 (QKEAAEKLNIGNNNLSNYER) form a DNA-binding region, H-T-H motif.

The polypeptide is HTH-type transcriptional regulator ImmR (immR) (Bacillus subtilis (strain 168)).